We begin with the raw amino-acid sequence, 491 residues long: Meiosis-specific nuclear structural protein 1 (491 aa).

The interval 1–314 (MATKKRALSF…QLEETLRQRD (314 aa)) is interaction with BBOF1. 2 coiled-coil regions span residues 29 to 253 (QVMN…RAQD) and 287 to 410 (RVHE…AVEK). Tyrosine 188 carries the phosphotyrosine modification.

It belongs to the MNS1 family. In terms of assembly, able to form oligomers. Microtubule inner protein component of sperm flagellar doublet microtubules. Interacts with ODAD1. Interacts with BBOF1. In terms of tissue distribution, high expression in testis. Expressed in pachytene spermatocytes and post-meiotic spermatids.

The protein localises to the nucleus. Its subcellular location is the cytoplasm. It localises to the cytoskeleton. The protein resides in the flagellum axoneme. It is found in the cilium axoneme. In terms of biological role, microtubule inner protein (MIP) part of the dynein-decorated doublet microtubules (DMTs) in cilia axoneme, which is required for motile cilia beating. May play a role in the control of meiotic division and germ cell differentiation through regulation of pairing and recombination during meiosis. Required for sperm flagella assembly. May play a role in the assembly and function of the outer dynein arm-docking complex (ODA-DC). ODA-DC mediates outer dynein arms (ODA) binding onto the axonemal doublet microtubules. The polypeptide is Meiosis-specific nuclear structural protein 1 (Mns1) (Mus musculus (Mouse)).